The following is a 354-amino-acid chain: Cellular communication network factor 6 (354 aa).

Residues 1 to 23 (MRRLLFCTLLMTGLTQLCCRTQG) form the signal peptide. An IGFBP N-terminal domain is found at 44–117 (RTEVCRWPCR…RYETGVCAYL (74 aa)). Intrachain disulfides connect C48–C72, C52–C74, C54–C75, C61–C78, C86–C100, C92–C114, C209–C238, C219–C223, C247–C252, C268–C305, C285–C319, C296–C335, and C299–C337. A TSP type-1 domain is found at 208–253 (KCLVQATKWTPCSRTCGMGISNRVTNDNANCEMRKERRLCYIQPCS). The region spanning 268–342 (CQPTFQLPKA…TSCVCQRDCR (75 aa)) is the CTCK domain. Residue N308 is glycosylated (N-linked (GlcNAc...) asparagine).

It belongs to the CCN family.

Its subcellular location is the secreted. It localises to the mitochondrion. Its function is as follows. Plays a role in mitochondrial electron transport and mitochondrial respiration. The chain is Cellular communication network factor 6 from Mus musculus (Mouse).